A 401-amino-acid polypeptide reads, in one-letter code: Enoyl-[acyl-carrier-protein] reductase [NADH] (401 aa).

NAD(+) is bound by residues 48–53 (GSSSGY), 74–75 (FE), 111–112 (DA), and 139–140 (LA). Tyr-225 contacts substrate. Tyr-235 functions as the Proton donor in the catalytic mechanism. Residues Lys-244 and 273–275 (VVT) each bind NAD(+).

Belongs to the TER reductase family. Monomer.

The enzyme catalyses a 2,3-saturated acyl-[ACP] + NAD(+) = a (2E)-enoyl-[ACP] + NADH + H(+). Its pathway is lipid metabolism; fatty acid biosynthesis. Involved in the final reduction of the elongation cycle of fatty acid synthesis (FAS II). Catalyzes the reduction of a carbon-carbon double bond in an enoyl moiety that is covalently linked to an acyl carrier protein (ACP). The polypeptide is Enoyl-[acyl-carrier-protein] reductase [NADH] (Shewanella putrefaciens (strain CN-32 / ATCC BAA-453)).